The following is a 453-amino-acid chain: Methylenetetrahydrofolate--tRNA-(uracil-5-)-methyltransferase TrmFO (453 aa).

An FAD-binding site is contributed by 10 to 15; the sequence is GGGLAG. Positions 433–453 are disordered; sequence ELAPWIDSAPPTAVPAAPAAG. A compositionally biased stretch (low complexity) spans 441–453; sequence APPTAVPAAPAAG.

The protein belongs to the MnmG family. TrmFO subfamily. The cofactor is FAD.

The protein localises to the cytoplasm. The enzyme catalyses uridine(54) in tRNA + (6R)-5,10-methylene-5,6,7,8-tetrahydrofolate + NADH + H(+) = 5-methyluridine(54) in tRNA + (6S)-5,6,7,8-tetrahydrofolate + NAD(+). It catalyses the reaction uridine(54) in tRNA + (6R)-5,10-methylene-5,6,7,8-tetrahydrofolate + NADPH + H(+) = 5-methyluridine(54) in tRNA + (6S)-5,6,7,8-tetrahydrofolate + NADP(+). Catalyzes the folate-dependent formation of 5-methyl-uridine at position 54 (M-5-U54) in all tRNAs. This Anaeromyxobacter dehalogenans (strain 2CP-1 / ATCC BAA-258) protein is Methylenetetrahydrofolate--tRNA-(uracil-5-)-methyltransferase TrmFO.